Reading from the N-terminus, the 390-residue chain is 8-demethyl-8-(2-methoxy-alpha-L-rhamnosyl)-tetracenomycin-C 3'-O-methyltransferase (390 aa).

S-adenosyl-L-methionine-binding positions include glutamate 202 to tyrosine 208, serine 217, aspartate 234, serine 252 to glutamine 253, and aspartate 275. Mg(2+) is bound at residue aspartate 275. The active-site Proton acceptor is the histidine 278. Positions 303 and 304 each coordinate Mg(2+).

Belongs to the methyltransferase OleY/MycE family. Mg(2+) serves as cofactor.

The enzyme catalyses 8-demethyl-8-(2-O-methyl-alpha-L-rhamnosyl)-tetracenomycin C + S-adenosyl-L-methionine = 8-demethyl-8-(2,3-di-O-methyl-alpha-L-rhamnosyl)-tetracenomycin C + S-adenosyl-L-homocysteine + H(+). It functions in the pathway antibiotic biosynthesis. Its function is as follows. O-methyltransferase involved in the biosynthesis of the permethylated L-rhamnose moiety of elloramycin, an antitumor polyketide. Mediates the methylation of the hydroxy groups at the 3'-position after the sugar moiety has been attached to the aglycon. This Streptomyces olivaceus protein is 8-demethyl-8-(2-methoxy-alpha-L-rhamnosyl)-tetracenomycin-C 3'-O-methyltransferase.